The following is a 100-amino-acid chain: Small ribosomal subunit protein uS14c (100 aa).

This sequence belongs to the universal ribosomal protein uS14 family. Part of the 30S ribosomal subunit.

The protein localises to the plastid. It is found in the chloroplast. In terms of biological role, binds 16S rRNA, required for the assembly of 30S particles. This is Small ribosomal subunit protein uS14c from Chlorella vulgaris (Green alga).